The primary structure comprises 706 residues: Elongation factor G (706 aa).

In terms of domain architecture, tr-type G spans 8 to 297 (SYVRNIGIGA…AVVDYLPSPN (290 aa)). GTP-binding positions include 17-24 (AHIDAGKT), 95-99 (DTPGH), and 149-152 (NKMD).

Belongs to the TRAFAC class translation factor GTPase superfamily. Classic translation factor GTPase family. EF-G/EF-2 subfamily.

Its subcellular location is the cytoplasm. Functionally, catalyzes the GTP-dependent ribosomal translocation step during translation elongation. During this step, the ribosome changes from the pre-translocational (PRE) to the post-translocational (POST) state as the newly formed A-site-bound peptidyl-tRNA and P-site-bound deacylated tRNA move to the P and E sites, respectively. Catalyzes the coordinated movement of the two tRNA molecules, the mRNA and conformational changes in the ribosome. The chain is Elongation factor G from Orientia tsutsugamushi (strain Ikeda) (Rickettsia tsutsugamushi).